A 314-amino-acid polypeptide reads, in one-letter code: Small ribosomal subunit protein uS11m (314 aa).

The transit peptide at 1–37 directs the protein to the mitochondrion; the sequence is MNGVSRHLRASSLLSLIRSYGGINSVCRFSSQSDGFS. Residues 34-138 are disordered; the sequence is DGFSGGRFRE…GSGFSAPSLS (105 aa). Polar residues predominate over residues 50-63; the sequence is ESANNSGLSNTGRI. Low complexity predominate over residues 103-114; it reads SSLRSRLPNSLP.

Belongs to the universal ribosomal protein uS11 family. As to quaternary structure, component of the mitochondrial ribosome small subunit (28S) which comprises a 12S rRNA and about 30 distinct proteins.

It localises to the mitochondrion. In terms of biological role, required for karyogamy during female gametophyte development, when the two polar nuclei fuse to form the diploid central cell nucleus. This Arabidopsis thaliana (Mouse-ear cress) protein is Small ribosomal subunit protein uS11m.